Here is a 413-residue protein sequence, read N- to C-terminus: Histidine decarboxylase (413 aa).

H129 contributes to the substrate binding site. Position 242 is an N6-(pyridoxal phosphate)lysine (K242).

This sequence belongs to the group II decarboxylase family. The cofactor is pyridoxal 5'-phosphate. In terms of tissue distribution, ripe fruits; not detected in leaves and unripe fruit.

It carries out the reaction L-histidine + H(+) = histamine + CO2. The sequence is that of Histidine decarboxylase (HDC) from Solanum lycopersicum (Tomato).